Reading from the N-terminus, the 102-residue chain is Large ribosomal subunit protein bL21 (102 aa).

It belongs to the bacterial ribosomal protein bL21 family. In terms of assembly, part of the 50S ribosomal subunit. Contacts protein L20.

Functionally, this protein binds to 23S rRNA in the presence of protein L20. This Finegoldia magna (strain ATCC 29328 / DSM 20472 / WAL 2508) (Peptostreptococcus magnus) protein is Large ribosomal subunit protein bL21.